Reading from the N-terminus, the 306-residue chain is Mitochondrial substrate carrier family protein ucpA (306 aa).

The Mitochondrial intermembrane segment spans residues 1 to 15; the sequence is MSVNLNNNKNNKNKV. Solcar repeat units lie at residues 13 to 103, 112 to 204, and 211 to 301; these read NKVA…ISNA, YFFL…CKNL, and DGIY…FKKL. The helical transmembrane segment at 16 to 36 threads the bilayer; that stretch reads AIGFISGSLASICATTVTNPI. The Mitochondrial matrix portion of the chain corresponds to 37-83; that stretch reads ELVKTRLQLQGELQLSQRIYNGVWDAFKQIYKTEGIRGLQSGLIPAY. A helical transmembrane segment spans residues 84-103; it reads FSQATMQGIRLGSFDLISNA. The Mitochondrial intermembrane segment spans residues 104 to 117; the sequence is LGAKPNQDYFFLKN. The chain crosses the membrane as a helical span at residues 118–138; the sequence is LLAGATAGAIGAAAGSPFDLV. Residues 139 to 174 are Mitochondrial matrix-facing; sequence KVRMQAANMYKNDPQFVGYSSSFAAFKQIIQKEGFK. A helical transmembrane segment spans residues 175–195; it reads GLTRGMLTSAQRTAVGSAIQL. Topologically, residues 196–211 are mitochondrial intermembrane; the sequence is STYGSCKNLVLNFVDD. Residues 212-232 form a helical membrane-spanning segment; sequence GIYAYIISSMVAGFIVTFGMN. Residues 233-276 lie on the Mitochondrial matrix side of the membrane; the sequence is PFDVARTRLYFQGKGNSHGEIYKGLMDCVYKTVKKEGFGAVYKG. A helical membrane pass occupies residues 277 to 295; it reads FWAHYLRLGPHTILTLVFW. At 296-306 the chain is on the mitochondrial intermembrane side; it reads EQFKKLFSGEL.

This sequence belongs to the mitochondrial carrier (TC 2.A.29) family.

The protein resides in the mitochondrion inner membrane. Its function is as follows. Mitochondrial solute carriers shuttle metabolites, nucleotides, and cofactors through the mitochondrial inner membrane. Transports oxaloacetate and sulfate. The protein is Mitochondrial substrate carrier family protein ucpA (ucpA) of Dictyostelium discoideum (Social amoeba).